Here is a 550-residue protein sequence, read N- to C-terminus: Glucose-6-phosphate isomerase 1 (550 aa).

Glu353 functions as the Proton donor in the catalytic mechanism. Residues His384 and Lys512 contribute to the active site.

Belongs to the GPI family.

The protein localises to the cytoplasm. It catalyses the reaction alpha-D-glucose 6-phosphate = beta-D-fructose 6-phosphate. Its pathway is carbohydrate biosynthesis; gluconeogenesis. The protein operates within carbohydrate degradation; glycolysis; D-glyceraldehyde 3-phosphate and glycerone phosphate from D-glucose: step 2/4. In terms of biological role, catalyzes the reversible isomerization of glucose-6-phosphate to fructose-6-phosphate. In Thiobacillus denitrificans (strain ATCC 25259 / T1), this protein is Glucose-6-phosphate isomerase 1.